The primary structure comprises 356 residues: Phospho-2-dehydro-3-deoxyheptonate aldolase, Tyr-sensitive (356 aa).

This sequence belongs to the class-I DAHP synthase family.

It catalyses the reaction D-erythrose 4-phosphate + phosphoenolpyruvate + H2O = 7-phospho-2-dehydro-3-deoxy-D-arabino-heptonate + phosphate. It participates in metabolic intermediate biosynthesis; chorismate biosynthesis; chorismate from D-erythrose 4-phosphate and phosphoenolpyruvate: step 1/7. Its function is as follows. Stereospecific condensation of phosphoenolpyruvate (PEP) and D-erythrose-4-phosphate (E4P) giving rise to 3-deoxy-D-arabino-heptulosonate-7-phosphate (DAHP). This is Phospho-2-dehydro-3-deoxyheptonate aldolase, Tyr-sensitive (aroF) from Salmonella typhi.